The following is a 446-amino-acid chain: Transcription factor SOX-8 (446 aa).

Disordered stretches follow at residues 1 to 58 (MLDM…DPAE), 155 to 259 (AERL…RQNI), and 318 to 378 (HKSA…PFAG). The span at 40–53 (EGLGRAGVAVGGAR) shows a compositional bias: gly residues. The interval 58-100 (EAADERFPACIRDAVSQVLKGYDWSLVPMPVRGGGGGALKAKP) is dimerization (DIM). The segment at residues 102–170 (VKRPMNAFMV…QHKKDHPDYK (69 aa)) is a DNA-binding region (HMG box). Basic and acidic residues-rich tracts occupy residues 155–171 (AERL…DYKY), 210–219 (DGHHHGDHTG), and 242–253 (PELKLEGRRPVD). The tract at residues 224-298 (PPTPPTTPKT…LPLGGPAPPE (75 aa)) is transactivation domain (TAM). The transactivation domain (TAC) stretch occupies residues 335–446 (RPHIKTEQPS…QPVYTTLTRP (112 aa)). Low complexity predominate over residues 362 to 378 (SGQSSATPAAPAGPFAG). The 9aaTAD motif lies at 400–408 (PGLYQYPCF). Residues 425–446 (LPPAHSPTSHWDQPVYTTLTRP) are disordered. The segment covering 430 to 446 (SPTSHWDQPVYTTLTRP) has biased composition (polar residues).

Its subcellular location is the nucleus. Transcription factor that may play a role in central nervous system, limb and facial development. May be involved in male sex determination. Binds the consensus motif 5'-[AT][AT]CAA[AT]G-3'. The protein is Transcription factor SOX-8 of Homo sapiens (Human).